The primary structure comprises 278 residues: Small ribosomal subunit protein uS2 (278 aa).

2 disordered regions span residues 216–235 (EAAA…TQWD) and 250–278 (NFAA…EWTN). Low complexity predominate over residues 256–278 (ADGNWGATTGGDWAAAGGEEWTN).

This sequence belongs to the universal ribosomal protein uS2 family. In terms of assembly, component of the small ribosomal subunit. Mature ribosomes consist of a small (40S) and a large (60S) subunit. The 40S subunit contains about 33 different proteins and 1 molecule of RNA (18S). The 60S subunit contains about 49 different proteins and 3 molecules of RNA (25S, 5.8S and 5S). Interacts with ribosomal protein S21.

The protein localises to the cytoplasm. Its function is as follows. Required for the assembly and/or stability of the 40S ribosomal subunit. Required for the processing of the 20S rRNA-precursor to mature 18S rRNA in a late step of the maturation of 40S ribosomal subunits. This chain is Small ribosomal subunit protein uS2, found in Monosiga brevicollis (Choanoflagellate).